The chain runs to 466 residues: Oxysterol-binding protein 4 (466 aa).

The segment covering 1 to 12 (MEIGTSSTTNNI) has biased composition (polar residues). The segment at 1–67 (MEIGTSSTTN…STSPPSPPIE (67 aa)) is disordered. Residues 24 to 45 (NNNNHNNNSSNNSSNNNSISSS) are compositionally biased toward low complexity. The segment covering 46–60 (PTDSSQLMNGEQSTS) has biased composition (polar residues).

The protein belongs to the OSBP family.

This chain is Oxysterol-binding protein 4 (osbD), found in Dictyostelium discoideum (Social amoeba).